A 277-amino-acid polypeptide reads, in one-letter code: Radial spoke head protein 9 homolog (277 aa).

This sequence belongs to the flagellar radial spoke RSP9 family. As to quaternary structure, component of axonemal radial spoke complexes.

The protein resides in the cytoplasm. Its subcellular location is the cytoskeleton. It localises to the cilium axoneme. It is found in the flagellum axoneme. The protein localises to the cell projection. The protein resides in the kinocilium. In terms of biological role, functions as part of axonemal radial spoke complexes that play an important part in the motility of sperm and cilia. Essential for both the radial spoke head assembly and the central pair microtubule stability in ependymal motile cilia. Required for motility of olfactory and neural cilia and for the structural integrity of ciliary axonemes in both 9+0 and 9+2 motile cilia. This Xenopus tropicalis (Western clawed frog) protein is Radial spoke head protein 9 homolog (rsph9).